Reading from the N-terminus, the 243-residue chain is Protein S40-7 (243 aa).

2 disordered regions span residues 1–68 and 107–143; these read MNKN…KSGL and SSTA…ERLP. The span at 10 to 20 shows a compositional bias: polar residues; the sequence is SSPSSLATISD. The span at 22–32 shows a compositional bias: acidic residues; the sequence is ADGELNEDDIF. The segment covering 47-67 has biased composition (polar residues); that stretch reads PVSSPAKQQTPARQLQRSKSG.

The protein belongs to the senescence regulator S40 family.

The protein resides in the cytoplasm. The chain is Protein S40-7 from Arabidopsis thaliana (Mouse-ear cress).